Here is a 170-residue protein sequence, read N- to C-terminus: Neurotensin/neuromedin N (170 aa).

Positions 1-23 are cleaved as a signal peptide; sequence MMAGMKIQLVCMILLAFSSWSLC.

Belongs to the neurotensin family. Interacts with NTSR1. Interacts with SORT1. Interacts with SORL1. In terms of processing, neurotensin is cleaved and degraded by Angiotensin-converting enzyme (ACE) and neprilysin (MME). As to expression, brain and gut.

It localises to the secreted. The protein resides in the cytoplasmic vesicle. Its subcellular location is the secretory vesicle. Its function is as follows. Neurotensin may play an endocrine or paracrine role in the regulation of fat metabolism. It causes contraction of smooth muscle. This is Neurotensin/neuromedin N (NTS) from Bos taurus (Bovine).